The following is a 57-amino-acid chain: Protein translocase subunit SecE (57 aa).

The helical transmembrane segment at 33–53 threads the bilayer; the sequence is GAGIFLVGLLGFIIFAVMSFL.

The protein belongs to the SecE/SEC61-gamma family. In terms of assembly, component of the Sec protein translocase complex. Heterotrimer consisting of SecY (alpha), SecG (beta) and SecE (gamma) subunits. The heterotrimers can form oligomers, although 1 heterotrimer is thought to be able to translocate proteins. Interacts with the ribosome. May interact with SecDF, and other proteins may be involved.

The protein resides in the cell membrane. In terms of biological role, essential subunit of the Sec protein translocation channel SecYEG. Clamps together the 2 halves of SecY. May contact the channel plug during translocation. The chain is Protein translocase subunit SecE from Haloferax mediterranei (strain ATCC 33500 / DSM 1411 / JCM 8866 / NBRC 14739 / NCIMB 2177 / R-4) (Halobacterium mediterranei).